The sequence spans 445 residues: Reticulon-4 receptor-like 1 (445 aa).

The signal sequence occupies residues 1–24 (MLRKGCCVELLLLLLAGELPLGGG). Residues 25–54 (CPRDCVCYPAPMTVSCQAHNFAAIPEGIPE) form the LRRNT domain. 8 LRR repeats span residues 55–76 (DSER…HFSP), 77–98 (AMVT…TFEG), 101–123 (HLEE…TFQG), 126–147 (KLHA…IFGG), 150–171 (SLQY…IFVD), 174–195 (NLSH…IFRG), 198–219 (NLDR…AFHD), and 222–243 (RLTT…CLAP). The region spanning 255–306 (NAWDCGCRARSLWEWLRRFRGSSSAVPCATPELRQGQDLKLLRVEDFRNCTG) is the LRRCT domain. Disordered regions lie at residues 307 to 377 (PVSP…SGKE) and 401 to 424 (RPKR…QQAS). Basic residues-rich tracts occupy residues 352–366 (GYKK…HRNR) and 401–413 (RPKR…RRTP). S424 is lipidated: GPI-anchor amidated serine. The helical transmembrane segment at 424-444 (SSGTALGAPLLAWILGLAVTL) threads the bilayer. A propeptide spans 425-445 (SGTALGAPLLAWILGLAVTLR) (removed in mature form).

The protein belongs to the Nogo receptor family. In terms of assembly, identified in a complex that contains RTN4R, RTN4RL1 and NGFR; the interaction depends on the presence of chondroitin sulfate proteoglycans. Does not interact with MAG, OMG and RTN4. Detected in brain (at protein level). Detected in retina ganglion cell layer and inner nuclear layer.

It is found in the cell membrane. The protein localises to the membrane raft. It localises to the perikaryon. The protein resides in the cell projection. Its function is as follows. Cell surface receptor that plays a functionally redundant role in postnatal brain development and in regulating axon regeneration in the adult central nervous system. Contributes to normal axon migration across the brain midline and normal formation of the corpus callosum. Protects motoneurons against apoptosis; protection against apoptosis is probably mediated by MAG. Plays a role in inhibiting neurite outgrowth and axon regeneration via its binding to neuronal chondroitin sulfate proteoglycans. Binds heparin. Like other family members, plays a role in restricting the number dendritic spines and the number of synapses that are formed during brain development. Signaling mediates activation of Rho and downstream reorganization of the actin cytoskeleton. This chain is Reticulon-4 receptor-like 1, found in Mus musculus (Mouse).